The chain runs to 176 residues: Xanthine-guanine phosphoribosyltransferase (176 aa).

5-phospho-alpha-D-ribose 1-diphosphate-binding positions include 51–52 (RG) and 110–118 (DDLVDTGKT). D111 is a binding site for Mg(2+). Residues D114 and I157 each contribute to the guanine site. Residues D114 and I157 each contribute to the xanthine site. GMP is bound by residues 114 to 118 (DTGKT) and 156 to 157 (WI).

The protein belongs to the purine/pyrimidine phosphoribosyltransferase family. XGPT subfamily. In terms of assembly, homotetramer. Mg(2+) is required as a cofactor.

It is found in the cell inner membrane. The enzyme catalyses GMP + diphosphate = guanine + 5-phospho-alpha-D-ribose 1-diphosphate. It catalyses the reaction XMP + diphosphate = xanthine + 5-phospho-alpha-D-ribose 1-diphosphate. It carries out the reaction IMP + diphosphate = hypoxanthine + 5-phospho-alpha-D-ribose 1-diphosphate. Its pathway is purine metabolism; GMP biosynthesis via salvage pathway; GMP from guanine: step 1/1. It participates in purine metabolism; XMP biosynthesis via salvage pathway; XMP from xanthine: step 1/1. Purine salvage pathway enzyme that catalyzes the transfer of the ribosyl-5-phosphate group from 5-phospho-alpha-D-ribose 1-diphosphate (PRPP) to the N9 position of the 6-oxopurines guanine and xanthine to form the corresponding ribonucleotides GMP (guanosine 5'-monophosphate) and XMP (xanthosine 5'-monophosphate), with the release of PPi. To a lesser extent, also acts on hypoxanthine. This Bradyrhizobium diazoefficiens (strain JCM 10833 / BCRC 13528 / IAM 13628 / NBRC 14792 / USDA 110) protein is Xanthine-guanine phosphoribosyltransferase.